The chain runs to 148 residues: MSIWVDADACPGVIKELLFRAAERTRTPLILVANQPVRVPRSRYVRRVQVAPGFDVADNEIVRCVEPGDLVITADIPLAAEVIAKGAHALNPRGERYTTSNIKARLNMRDFMDTLRASGVDTGGAPAMSQRDRQAFANELDRFLTANR.

It belongs to the UPF0178 family.

The protein is UPF0178 protein Mlg_1612 of Alkalilimnicola ehrlichii (strain ATCC BAA-1101 / DSM 17681 / MLHE-1).